A 357-amino-acid chain; its full sequence is Peptide chain release factor 1 (357 aa).

Gln232 carries the post-translational modification N5-methylglutamine. The segment covering 284-304 (AERAAERKGQIGSGDRSERIR) has biased composition (basic and acidic residues). The segment at 284-308 (AERAAERKGQIGSGDRSERIRTYNY) is disordered.

It belongs to the prokaryotic/mitochondrial release factor family. Methylated by PrmC. Methylation increases the termination efficiency of RF1.

It is found in the cytoplasm. Its function is as follows. Peptide chain release factor 1 directs the termination of translation in response to the peptide chain termination codons UAG and UAA. The sequence is that of Peptide chain release factor 1 from Maricaulis maris (strain MCS10) (Caulobacter maris).